The chain runs to 253 residues: 5-oxoprolinase subunit A (253 aa).

The protein belongs to the LamB/PxpA family. In terms of assembly, forms a complex composed of PxpA, PxpB and PxpC.

It carries out the reaction 5-oxo-L-proline + ATP + 2 H2O = L-glutamate + ADP + phosphate + H(+). Its function is as follows. Catalyzes the cleavage of 5-oxoproline to form L-glutamate coupled to the hydrolysis of ATP to ADP and inorganic phosphate. The sequence is that of 5-oxoprolinase subunit A from Chloroflexus aurantiacus (strain ATCC 29364 / DSM 637 / Y-400-fl).